The following is a 503-amino-acid chain: Probable DNA double-strand break repair helicase HerA (503 aa).

ATP contacts are provided by residues Arg-122, 131 to 136 (GGGKSN), and 478 to 479 (KI).

The protein belongs to the HerA family.

It carries out the reaction Couples ATP hydrolysis with the unwinding of duplex DNA at the replication fork by translocating in the 5'-3' direction. This creates two antiparallel DNA single strands (ssDNA). The leading ssDNA polymer is the template for DNA polymerase III holoenzyme which synthesizes a continuous strand.. It catalyses the reaction ATP + H2O = ADP + phosphate + H(+). The enzyme catalyses Couples ATP hydrolysis with the unwinding of duplex DNA by translocating in the 3'-5' direction.. Involved in DNA double-strand break (DSB) repair. Probably acts with NurA to stimulate resection of the 5' strand and produce the long 3' single-strand that is required for RadA loading. Has DNA-dependent ATPase activity and DNA helicase activity. In Methanocaldococcus jannaschii (strain ATCC 43067 / DSM 2661 / JAL-1 / JCM 10045 / NBRC 100440) (Methanococcus jannaschii), this protein is Probable DNA double-strand break repair helicase HerA.